We begin with the raw amino-acid sequence, 454 residues long: Bifunctional protein GlmU (454 aa).

The interval 1-231 is pyrophosphorylase; sequence MDRATVSLIV…EAETLGVNTR (231 aa). UDP-N-acetyl-alpha-D-glucosamine is bound by residues 11–14, lysine 25, glutamine 78, 83–84, 106–108, glycine 143, glutamate 157, asparagine 172, and asparagine 229; these read LAAG, GT, and YGD. A Mg(2+)-binding site is contributed by aspartate 108. Asparagine 229 is a binding site for Mg(2+). A linker region spans residues 232 to 252; the sequence is AQLAEAEAEFQKRARAAALED. Positions 253 to 454 are N-acetyltransferase; the sequence is GVTLTAPDTV…AKAAKKKEAP (202 aa). The UDP-N-acetyl-alpha-D-glucosamine site is built by arginine 318 and lysine 336. Histidine 348 acts as the Proton acceptor in catalysis. The UDP-N-acetyl-alpha-D-glucosamine site is built by tyrosine 351 and asparagine 362. Residues alanine 365, 371 to 372, serine 390, serine 408, and arginine 425 each bind acetyl-CoA; that span reads NY.

The protein in the N-terminal section; belongs to the N-acetylglucosamine-1-phosphate uridyltransferase family. It in the C-terminal section; belongs to the transferase hexapeptide repeat family. As to quaternary structure, homotrimer. It depends on Mg(2+) as a cofactor.

The protein resides in the cytoplasm. It catalyses the reaction alpha-D-glucosamine 1-phosphate + acetyl-CoA = N-acetyl-alpha-D-glucosamine 1-phosphate + CoA + H(+). The catalysed reaction is N-acetyl-alpha-D-glucosamine 1-phosphate + UTP + H(+) = UDP-N-acetyl-alpha-D-glucosamine + diphosphate. The protein operates within nucleotide-sugar biosynthesis; UDP-N-acetyl-alpha-D-glucosamine biosynthesis; N-acetyl-alpha-D-glucosamine 1-phosphate from alpha-D-glucosamine 6-phosphate (route II): step 2/2. It participates in nucleotide-sugar biosynthesis; UDP-N-acetyl-alpha-D-glucosamine biosynthesis; UDP-N-acetyl-alpha-D-glucosamine from N-acetyl-alpha-D-glucosamine 1-phosphate: step 1/1. Its pathway is bacterial outer membrane biogenesis; LPS lipid A biosynthesis. Catalyzes the last two sequential reactions in the de novo biosynthetic pathway for UDP-N-acetylglucosamine (UDP-GlcNAc). The C-terminal domain catalyzes the transfer of acetyl group from acetyl coenzyme A to glucosamine-1-phosphate (GlcN-1-P) to produce N-acetylglucosamine-1-phosphate (GlcNAc-1-P), which is converted into UDP-GlcNAc by the transfer of uridine 5-monophosphate (from uridine 5-triphosphate), a reaction catalyzed by the N-terminal domain. This Cereibacter sphaeroides (strain ATCC 17023 / DSM 158 / JCM 6121 / CCUG 31486 / LMG 2827 / NBRC 12203 / NCIMB 8253 / ATH 2.4.1.) (Rhodobacter sphaeroides) protein is Bifunctional protein GlmU.